We begin with the raw amino-acid sequence, 143 residues long: MERVNKLCVAFFVINMMMAVAAAQSATNVRATYHLYNPQNINWDLRTASVYCATWDADKPLEWRRRYGWTAFCGPAGPTGQASCGRCLRVTNTGTGTQETVRIVDQCRNGGLDLDVNVFNRLDTNGLGYQRGNLNVNYEFVNC.

The N-terminal stretch at 1–23 (MERVNKLCVAFFVINMMMAVAAA) is a signal peptide. Residues 24–143 (QSATNVRATY…LNVNYEFVNC (120 aa)) enclose the Barwin domain. Cystine bridges form between Cys52–Cys84, Cys73–Cys107, and Cys87–Cys143.

The protein resides in the secreted. Its subcellular location is the cell wall. The sequence is that of Pathogenesis-related protein P2 from Solanum lycopersicum (Tomato).